We begin with the raw amino-acid sequence, 470 residues long: Cysteine--tRNA ligase (470 aa).

Cys46 contacts Zn(2+). A 'HIGH' region motif is present at residues 48 to 58 (PTVYDLAHIGN). Zn(2+) contacts are provided by Cys230, His255, and Glu259. The 'KMSKS' region motif lies at 288-292 (KMSKS). ATP is bound at residue Lys291.

Belongs to the class-I aminoacyl-tRNA synthetase family. In terms of assembly, monomer. It depends on Zn(2+) as a cofactor.

Its subcellular location is the cytoplasm. It catalyses the reaction tRNA(Cys) + L-cysteine + ATP = L-cysteinyl-tRNA(Cys) + AMP + diphosphate. The sequence is that of Cysteine--tRNA ligase from Granulibacter bethesdensis (strain ATCC BAA-1260 / CGDNIH1).